The chain runs to 432 residues: Polypyrimidine tract-binding protein homolog 3 (432 aa).

4 RRM domains span residues 6-80, 98-187, 245-319, and 355-429; these read KVVH…FSSH, NRIL…YNND, CTVL…FSKH, and KMIH…FSQL.

The protein localises to the nucleus. Its function is as follows. Plays a role in pre-mRNA splicing. Binds to the polypyrimidine tract of introns. May promote the binding of U2 snRNP to pre-mRNA. The sequence is that of Polypyrimidine tract-binding protein homolog 3 from Arabidopsis thaliana (Mouse-ear cress).